Consider the following 540-residue polypeptide: Chaperonin GroEL (540 aa).

ATP-binding positions include 29–32 (TLGP), 86–90 (DGTTT), glycine 413, 476–478 (NAA), and aspartate 492.

This sequence belongs to the chaperonin (HSP60) family. As to quaternary structure, forms a cylinder of 14 subunits composed of two heptameric rings stacked back-to-back. Interacts with the co-chaperonin GroES.

The protein resides in the cytoplasm. The catalysed reaction is ATP + H2O + a folded polypeptide = ADP + phosphate + an unfolded polypeptide.. Functionally, together with its co-chaperonin GroES, plays an essential role in assisting protein folding. The GroEL-GroES system forms a nano-cage that allows encapsulation of the non-native substrate proteins and provides a physical environment optimized to promote and accelerate protein folding. This is Chaperonin GroEL from Streptococcus pneumoniae (strain Hungary19A-6).